Here is a 184-residue protein sequence, read N- to C-terminus: Endothelial cell-specific molecule 1 (184 aa).

The signal sequence occupies residues 1-21 (MKSLLLLTTLLIPLHLGMAWS). In terms of domain architecture, IGFBP N-terminal spans 24–102 (YAVDCPEHCD…GDEFGVCKDC (79 aa)). 6 disulfide bridges follow: Cys28–Cys51, Cys32–Cys53, Cys37–Cys54, Cys43–Cys57, Cys65–Cys83, and Cys77–Cys99. The disordered stretch occupies residues 145–184 (RTSASQTERDAASGDGNAVREEIGDRNAARPSVMKWLNPR). The segment covering 151–172 (TERDAASGDGNAVREEIGDRNA) has biased composition (basic and acidic residues). Residue Ser157 is glycosylated (O-linked (Xyl...) (chondroitin sulfate) serine).

Post-translationally, O-glycosylated; contains chondroitin sulfate and dermatan sulfate. As to expression, pineal gland specific.

It localises to the secreted. Its function is as follows. Involved in angiogenesis; promotes angiogenic sprouting. May have potent implications in lung endothelial cell-leukocyte interactions. The sequence is that of Endothelial cell-specific molecule 1 (Esm1) from Rattus norvegicus (Rat).